Here is a 215-residue protein sequence, read N- to C-terminus: Beta-crystallin A3-2 (215 aa).

The N-terminal arm stretch occupies residues 1-30; it reads MEIPAIQTEREDITSEKMAQINPLPVPLGP. 2 consecutive Beta/gamma crystallin 'Greek key' domains span residues 31 to 70 and 71 to 117; these read WKIT…KVEC and GAWI…RPIC. The tract at residues 118-123 is connecting peptide; the sequence is SANHEE. Beta/gamma crystallin 'Greek key' domains are found at residues 124-165 and 166-214; these read SKLV…KVQC and GAWV…RRIQ.

It belongs to the beta/gamma-crystallin family. As to quaternary structure, homo/heterodimer, or complexes of higher-order. The structure of beta-crystallin oligomers seems to be stabilized through interactions between the N-terminal arms. In terms of processing, the N-terminus is blocked.

Crystallins are the dominant structural components of the vertebrate eye lens. This is Beta-crystallin A3-2 from Aquarana catesbeiana (American bullfrog).